The sequence spans 335 residues: Beta-hexosaminidase (335 aa).

Substrate is bound by residues Asp60, Arg68, Arg133, and 163-164 (KH). The active-site Proton donor/acceptor is His176. The active-site Nucleophile is Asp247.

This sequence belongs to the glycosyl hydrolase 3 family. NagZ subfamily.

It is found in the cytoplasm. It catalyses the reaction Hydrolysis of terminal non-reducing N-acetyl-D-hexosamine residues in N-acetyl-beta-D-hexosaminides.. It functions in the pathway cell wall biogenesis; peptidoglycan recycling. Functionally, plays a role in peptidoglycan recycling by cleaving the terminal beta-1,4-linked N-acetylglucosamine (GlcNAc) from peptide-linked peptidoglycan fragments, giving rise to free GlcNAc, anhydro-N-acetylmuramic acid and anhydro-N-acetylmuramic acid-linked peptides. In Xylella fastidiosa (strain M12), this protein is Beta-hexosaminidase.